We begin with the raw amino-acid sequence, 253 residues long: Chitooligosaccharide deacetylase (253 aa).

Mg(2+) contacts are provided by histidine 61 and histidine 126.

It belongs to the YdjC deacetylase family. ChbG subfamily. As to quaternary structure, homodimer. Requires Mg(2+) as cofactor.

Its subcellular location is the cytoplasm. It catalyses the reaction N,N'-diacetylchitobiose + H2O = N-acetyl-beta-D-glucosaminyl-(1-&gt;4)-D-glucosamine + acetate. The catalysed reaction is diacetylchitobiose-6'-phosphate + H2O = N'-monoacetylchitobiose-6'-phosphate + acetate. The protein operates within glycan degradation; chitin degradation. Functionally, involved in the degradation of chitin. ChbG is essential for growth on the acetylated chitooligosaccharides chitobiose and chitotriose but is dispensable for growth on cellobiose and chitosan dimer, the deacetylated form of chitobiose. Deacetylation of chitobiose-6-P and chitotriose-6-P is necessary for both the activation of the chb promoter by the regulatory protein ChbR and the hydrolysis of phosphorylated beta-glucosides by the phospho-beta-glucosidase ChbF. Catalyzes the removal of only one acetyl group from chitobiose-6-P to yield monoacetylchitobiose-6-P, the inducer of ChbR and the substrate of ChbF. In Yersinia enterocolitica serotype O:8 / biotype 1B (strain NCTC 13174 / 8081), this protein is Chitooligosaccharide deacetylase.